The primary structure comprises 171 residues: Dual specificity protein phosphatase OPG106 (171 aa).

Positions 1 to 27 (MDKKSLYKYLLLRSTGDMHKAKSPTIM) are dimerization. One can recognise a Tyrosine-protein phosphatase domain in the interval 23–171 (SPTIMTRVTN…IIEKYVIDKN (149 aa)). Cys-110 (phosphocysteine intermediate) is an active-site residue.

Belongs to the protein-tyrosine phosphatase family. Non-receptor class dual specificity subfamily. Homodimer.

Its subcellular location is the virion. It localises to the host cytoplasm. It catalyses the reaction O-phospho-L-tyrosyl-[protein] + H2O = L-tyrosyl-[protein] + phosphate. The enzyme catalyses O-phospho-L-seryl-[protein] + H2O = L-seryl-[protein] + phosphate. Functionally, serine/tyrosine phosphatase which down-regulates cellular antiviral response by dephosphorylating activated host STAT1 and blocking interferon (IFN)-stimulated innate immune responses. Dephosphorylates the OPG144 protein. The polypeptide is Dual specificity protein phosphatase OPG106 (OPG106) (Bos taurus (Bovine)).